Reading from the N-terminus, the 258-residue chain is NH(3)-dependent NAD(+) synthetase (258 aa).

34–41 (GLSGGIDS) lines the ATP pocket. Aspartate 40 is a binding site for Mg(2+). Arginine 116 is a binding site for deamido-NAD(+). Residue threonine 136 coordinates ATP. Glutamate 141 serves as a coordination point for Mg(2+). Residues lysine 165 and serine 187 each contribute to the ATP site.

This sequence belongs to the NAD synthetase family. In terms of assembly, homodimer.

It catalyses the reaction deamido-NAD(+) + NH4(+) + ATP = AMP + diphosphate + NAD(+) + H(+). It participates in cofactor biosynthesis; NAD(+) biosynthesis; NAD(+) from deamido-NAD(+) (ammonia route): step 1/1. In terms of biological role, catalyzes the ATP-dependent amidation of deamido-NAD to form NAD. Uses ammonia as a nitrogen source. The chain is NH(3)-dependent NAD(+) synthetase from Fusobacterium nucleatum subsp. nucleatum (strain ATCC 25586 / DSM 15643 / BCRC 10681 / CIP 101130 / JCM 8532 / KCTC 2640 / LMG 13131 / VPI 4355).